The chain runs to 543 residues: Chaperonin GroEL (543 aa).

Residues 29 to 32 (TLGP), 86 to 90 (DGTTT), Gly413, 478 to 480 (NAA), and Asp494 each bind ATP.

Belongs to the chaperonin (HSP60) family. In terms of assembly, forms a cylinder of 14 subunits composed of two heptameric rings stacked back-to-back. Interacts with the co-chaperonin GroES.

The protein localises to the cytoplasm. It catalyses the reaction ATP + H2O + a folded polypeptide = ADP + phosphate + an unfolded polypeptide.. Its function is as follows. Together with its co-chaperonin GroES, plays an essential role in assisting protein folding. The GroEL-GroES system forms a nano-cage that allows encapsulation of the non-native substrate proteins and provides a physical environment optimized to promote and accelerate protein folding. This chain is Chaperonin GroEL, found in Lactobacillus johnsonii (strain CNCM I-12250 / La1 / NCC 533).